We begin with the raw amino-acid sequence, 154 residues long: Large ribosomal subunit protein uL13 (154 aa).

This sequence belongs to the universal ribosomal protein uL13 family. In terms of assembly, part of the 50S ribosomal subunit.

In terms of biological role, this protein is one of the early assembly proteins of the 50S ribosomal subunit, although it is not seen to bind rRNA by itself. It is important during the early stages of 50S assembly. The polypeptide is Large ribosomal subunit protein uL13 (Bartonella quintana (strain Toulouse) (Rochalimaea quintana)).